Consider the following 254-residue polypeptide: MTKLEVCCYSVDCAQIAEKAGADRVELCCGQSEGGLTPSVGALIQARETVTIPVHPIVRPRGGDFCYSSNDFTIMKNDIARIRDLGFAGVVVGVLDTDGHIDMPRMREIMSVSGSLAVTFHRAFDMCQNPMIALKQLAELNVARILTSGQQQNAELGLALLKDLVAATKDQGPIIMAGAGVRLTNMQKFIDAGIRELHSSAGRTVPSTMRYRKAGVTMCADSDVDEFSHYCVDGEVVEAMKSLLVMGSPLAKHT.

This sequence belongs to the CutC family.

It is found in the cytoplasm. The protein is PF03932 family protein CutC of Yersinia pseudotuberculosis serotype O:1b (strain IP 31758).